Reading from the N-terminus, the 153-residue chain is MGRPPKCRRVEFIPQCTYFKPAGIPLWNLEEVGLAVEEVEALRLKDLEGLEQEDCAERMGISRPTFQRILTGARSKVAQALVTGRAIRVEGGNFEYVARRLRCTGCRAEWEPDPSDLNEQQCPKCGGKELMTRPERCSRPKRGAGKYRVPKKR.

A compositionally biased stretch (basic and acidic residues) spans 129 to 138 (ELMTRPERCS). The segment at 129 to 153 (ELMTRPERCSRPKRGAGKYRVPKKR) is disordered. A compositionally biased stretch (basic residues) spans 139–153 (RPKRGAGKYRVPKKR).

It belongs to the UPF0251 family.

The chain is UPF0251 protein Daud_0090 from Desulforudis audaxviator (strain MP104C).